Here is a 179-residue protein sequence, read N- to C-terminus: Large ribosomal subunit protein uL6 (179 aa).

The protein belongs to the universal ribosomal protein uL6 family. In terms of assembly, part of the 50S ribosomal subunit.

Functionally, this protein binds to the 23S rRNA, and is important in its secondary structure. It is located near the subunit interface in the base of the L7/L12 stalk, and near the tRNA binding site of the peptidyltransferase center. This Clostridium acetobutylicum (strain ATCC 824 / DSM 792 / JCM 1419 / IAM 19013 / LMG 5710 / NBRC 13948 / NRRL B-527 / VKM B-1787 / 2291 / W) protein is Large ribosomal subunit protein uL6.